Consider the following 761-residue polypeptide: Coenzyme PQQ synthesis protein F (761 aa).

H49 is a binding site for Zn(2+). E52 serves as the catalytic Proton acceptor. Residues H53 and E130 each coordinate Zn(2+).

This sequence belongs to the peptidase M16 family. Zn(2+) is required as a cofactor.

The protein operates within cofactor biosynthesis; pyrroloquinoline quinone biosynthesis. Required for coenzyme pyrroloquinoline quinone (PQQ) biosynthesis. It is thought that this protein is a protease that cleaves peptides bond in a small peptide (gene pqqA), providing the glutamate and tyrosine residues which are necessary for the synthesis of PQQ. The sequence is that of Coenzyme PQQ synthesis protein F (pqqF) from Klebsiella pneumoniae.